A 240-amino-acid polypeptide reads, in one-letter code: EF-hand domain-containing protein D2 (240 aa).

The tract at residues 1-51 is disordered; it reads MATDELASKLSRRLQMEGEGGEATEQPGLNGAAAAAAAEAPDETAQALGSA. Position 2 is an N-acetylalanine (A2). S11 carries the phosphoserine modification. Over residues 32–47 the composition is skewed to low complexity; sequence AAAAAAAEAPDETAQA. A phosphoserine mark is found at S74 and S76. Y83 carries the phosphotyrosine modification. EF-hand domains lie at 92-127 and 128-163; these read KQIK…LGAP and QTHL…AAAG. Ca(2+) contacts are provided by D105, D109, E116, D141, D143, D145, K147, and E152. K233 is subject to N6-acetyllysine.

As to quaternary structure, interacts with CASP9; with inactive form. In terms of tissue distribution, detected in thymus, kidney, spleen, lung, liver and brain. Highest abundance in brain and lowest in kidney and thymus.

Its subcellular location is the membrane raft. May regulate B-cell receptor (BCR)-induced immature and primary B-cell apoptosis. Plays a role as negative regulator of the canonical NF-kappa-B-activating branch. Controls spontaneous apoptosis through the regulation of BCL2L1 abundance. The protein is EF-hand domain-containing protein D2 (Efhd2) of Mus musculus (Mouse).